Consider the following 413-residue polypeptide: Multifunctional CCA protein (413 aa).

Residues Gly-8 and Arg-11 each coordinate ATP. Positions 8 and 11 each coordinate CTP. Mg(2+)-binding residues include Asp-21 and Asp-23. Positions 91, 143, and 146 each coordinate ATP. CTP-binding residues include Arg-91, Arg-143, and Arg-146. Residues Thr-232–Leu-333 enclose the HD domain.

It belongs to the tRNA nucleotidyltransferase/poly(A) polymerase family. Bacterial CCA-adding enzyme type 1 subfamily. In terms of assembly, monomer. Can also form homodimers and oligomers. Mg(2+) is required as a cofactor. It depends on Ni(2+) as a cofactor.

It carries out the reaction a tRNA precursor + 2 CTP + ATP = a tRNA with a 3' CCA end + 3 diphosphate. It catalyses the reaction a tRNA with a 3' CCA end + 2 CTP + ATP = a tRNA with a 3' CCACCA end + 3 diphosphate. Functionally, catalyzes the addition and repair of the essential 3'-terminal CCA sequence in tRNAs without using a nucleic acid template. Adds these three nucleotides in the order of C, C, and A to the tRNA nucleotide-73, using CTP and ATP as substrates and producing inorganic pyrophosphate. tRNA 3'-terminal CCA addition is required both for tRNA processing and repair. Also involved in tRNA surveillance by mediating tandem CCA addition to generate a CCACCA at the 3' terminus of unstable tRNAs. While stable tRNAs receive only 3'-terminal CCA, unstable tRNAs are marked with CCACCA and rapidly degraded. The chain is Multifunctional CCA protein from Burkholderia ambifaria (strain ATCC BAA-244 / DSM 16087 / CCUG 44356 / LMG 19182 / AMMD) (Burkholderia cepacia (strain AMMD)).